The primary structure comprises 297 residues: Indole-3-glycerol phosphate synthase (297 aa).

The protein belongs to the TrpC family.

The catalysed reaction is 1-(2-carboxyphenylamino)-1-deoxy-D-ribulose 5-phosphate + H(+) = (1S,2R)-1-C-(indol-3-yl)glycerol 3-phosphate + CO2 + H2O. It participates in amino-acid biosynthesis; L-tryptophan biosynthesis; L-tryptophan from chorismate: step 4/5. The sequence is that of Indole-3-glycerol phosphate synthase from Trichodesmium erythraeum (strain IMS101).